Consider the following 301-residue polypeptide: Pyridoxal 5'-phosphate synthase subunit PdxS (301 aa).

D31 serves as a coordination point for D-ribose 5-phosphate. K88 (schiff-base intermediate with D-ribose 5-phosphate) is an active-site residue. A D-ribose 5-phosphate-binding site is contributed by G160. Residue R172 coordinates D-glyceraldehyde 3-phosphate. D-ribose 5-phosphate-binding positions include G221 and 242 to 243 (GS). Positions 273–301 (EIAKSPGKGMKGQANETLPEEEKLQDRGI) are disordered. Residues 292–301 (EEEKLQDRGI) show a composition bias toward basic and acidic residues.

It belongs to the PdxS/SNZ family. In terms of assembly, in the presence of PdxT, forms a dodecamer of heterodimers.

The enzyme catalyses aldehydo-D-ribose 5-phosphate + D-glyceraldehyde 3-phosphate + L-glutamine = pyridoxal 5'-phosphate + L-glutamate + phosphate + 3 H2O + H(+). The protein operates within cofactor biosynthesis; pyridoxal 5'-phosphate biosynthesis. In terms of biological role, catalyzes the formation of pyridoxal 5'-phosphate from ribose 5-phosphate (RBP), glyceraldehyde 3-phosphate (G3P) and ammonia. The ammonia is provided by the PdxT subunit. Can also use ribulose 5-phosphate and dihydroxyacetone phosphate as substrates, resulting from enzyme-catalyzed isomerization of RBP and G3P, respectively. This chain is Pyridoxal 5'-phosphate synthase subunit PdxS, found in Natronomonas pharaonis (strain ATCC 35678 / DSM 2160 / CIP 103997 / JCM 8858 / NBRC 14720 / NCIMB 2260 / Gabara) (Halobacterium pharaonis).